Here is a 396-residue protein sequence, read N- to C-terminus: MLRDGNKQSKNNVRFVRKSIKTTVKTSLQNRSSLKKPPVGRSKSRSISSIPSSAVASTLSLPEKVETKCLEEDTQGESSSSGNKDPTTKVLDVTAKPKSKRRKSFTSLLVNGSKFDEKNGETTEPEKLPSIDDESNQLEVAEYVDDIYQFYWTAEALNPALGHYLSAHAEVSPVTRGILINWLIEVHFKFDLMHETLYLTMDLLDRYLSQVPIHKNEMQLIGLTALLLASKYEDYWHPRIKDLISISAESYTREQILGMERSMLKQLKFRLNAPTPYVFMLRFLKAAQSNKKLEQLAFYLIELCLVEYEALKYKPSLLCASAIYVARCTLHMTPVWTSLLNNHTHYNVSQMKDCSDMILRFHKAAKTGNLRVTYEKYINPDRSNVAVLKPLDKLPL.

Positions 1 to 98 are disordered; sequence MLRDGNKQSK…KVLDVTAKPK (98 aa). Residues 21–32 show a composition bias toward polar residues; the sequence is KTTVKTSLQNRS. Residues 39–57 show a composition bias toward low complexity; it reads VGRSKSRSISSIPSSAVAS. The segment covering 76–85 has biased composition (polar residues); it reads GESSSSGNKD.

The protein belongs to the cyclin family. Cyclin AB subfamily.

The protein is Putative cyclin-B3-1 (CYCB3-1) of Arabidopsis thaliana (Mouse-ear cress).